A 142-amino-acid chain; its full sequence is Hemoglobin subunit alpha (142 aa).

Positions Val2–Arg142 constitute a Globin domain. Ser4 carries the phosphoserine modification. N6-succinyllysine occurs at positions 8 and 12. Lys17 carries the post-translational modification N6-acetyllysine; alternate. N6-succinyllysine; alternate is present on Lys17. Residue Tyr25 is modified to Phosphotyrosine. A Phosphoserine modification is found at Ser36. An N6-succinyllysine modification is found at Lys41. Ser50 is modified (phosphoserine). His59 provides a ligand contact to O2. His88 lines the heme b pocket. Residue Ser103 is modified to Phosphoserine. Residue Thr109 is modified to Phosphothreonine. Phosphoserine occurs at positions 125 and 132. Phosphothreonine is present on residues Thr135 and Thr138. The residue at position 139 (Ser139) is a Phosphoserine.

Belongs to the globin family. As to quaternary structure, heterotetramer of two alpha chains and two beta chains. In terms of tissue distribution, red blood cells.

Involved in oxygen transport from the lung to the various peripheral tissues. Its function is as follows. Hemopressin acts as an antagonist peptide of the cannabinoid receptor CNR1. Hemopressin-binding efficiently blocks cannabinoid receptor CNR1 and subsequent signaling. This is Hemoglobin subunit alpha (HBA) from Chlorocebus aethiops (Green monkey).